We begin with the raw amino-acid sequence, 268 residues long: uncharacterized protein (268 aa).

This is an uncharacterized protein from Schizosaccharomyces pombe (strain 972 / ATCC 24843) (Fission yeast).